The sequence spans 694 residues: Maintenance of telomere capping protein 4 (694 aa).

Positions 1-12 (MTHTNEHDHKAE) are enriched in basic and acidic residues. Positions 1 to 26 (MTHTNEHDHKAEQQQNGRGDTTTETV) are disordered. Residues 13 to 26 (QQQNGRGDTTTETV) show a composition bias toward polar residues. Ser85 is subject to Phosphoserine. The span at 211–222 (YSPSNESSGSSS) shows a compositional bias: low complexity. 3 disordered regions span residues 211 to 287 (YSPS…PEAQ), 325 to 437 (AKGS…TETY), and 465 to 511 (KTSN…PVGL). A compositionally biased stretch (basic residues) spans 223-243 (SRRHHGHHIHPRRHLQHHSRV). A compositionally biased stretch (polar residues) spans 244-257 (RTANSVHSNTQSLT). The residue at position 263 (Thr263) is a Phosphothreonine. Over residues 276-287 (MITKIATTPEAQ) the composition is skewed to polar residues. Over residues 403–417 (SNGGTSRRSSNNGES) the composition is skewed to low complexity. Residues 418 to 437 (ISTNSSKSSMGITFGNTETY) are compositionally biased toward polar residues. The span at 471–485 (LRAEGEQALESDKEL) shows a compositional bias: basic and acidic residues. Residues Ser481 and Ser491 each carry the phosphoserine modification. A Phosphotyrosine modification is found at Tyr493. A helical transmembrane segment spans residues 655 to 675 (RLLEFGIVLVLWTIWFLFSVL).

It is found in the membrane. The protein localises to the cytoplasm. In Saccharomyces cerevisiae (strain ATCC 204508 / S288c) (Baker's yeast), this protein is Maintenance of telomere capping protein 4 (MTC4).